We begin with the raw amino-acid sequence, 220 residues long: Ribonuclease P protein component 3 (220 aa).

The protein belongs to the eukaryotic/archaeal RNase P protein component 3 family. In terms of assembly, consists of a catalytic RNA component and at least 4-5 protein subunits.

The protein resides in the cytoplasm. It catalyses the reaction Endonucleolytic cleavage of RNA, removing 5'-extranucleotides from tRNA precursor.. Its function is as follows. Part of ribonuclease P, a protein complex that generates mature tRNA molecules by cleaving their 5'-ends. The sequence is that of Ribonuclease P protein component 3 from Thermococcus kodakarensis (strain ATCC BAA-918 / JCM 12380 / KOD1) (Pyrococcus kodakaraensis (strain KOD1)).